A 160-amino-acid chain; its full sequence is Major strawberry allergen Fra a 1.07 (160 aa).

The protein belongs to the BetVI family. Post-translationally, phosphorylated in vivo. Phosphorylation prevents its activity as ribonuclease. As to expression, highly expressed in roots. Expressed a low levels in ripe red fruits.

Its function is as follows. Possesses ribonuclease activity in vitro. This chain is Major strawberry allergen Fra a 1.07, found in Fragaria ananassa (Strawberry).